The sequence spans 602 residues: Proline--tRNA ligase (602 aa).

It belongs to the class-II aminoacyl-tRNA synthetase family. ProS type 1 subfamily. Homodimer.

The protein localises to the cytoplasm. The enzyme catalyses tRNA(Pro) + L-proline + ATP = L-prolyl-tRNA(Pro) + AMP + diphosphate. Functionally, catalyzes the attachment of proline to tRNA(Pro) in a two-step reaction: proline is first activated by ATP to form Pro-AMP and then transferred to the acceptor end of tRNA(Pro). As ProRS can inadvertently accommodate and process non-cognate amino acids such as alanine and cysteine, to avoid such errors it has two additional distinct editing activities against alanine. One activity is designated as 'pretransfer' editing and involves the tRNA(Pro)-independent hydrolysis of activated Ala-AMP. The other activity is designated 'posttransfer' editing and involves deacylation of mischarged Ala-tRNA(Pro). The misacylated Cys-tRNA(Pro) is not edited by ProRS. In Thermosynechococcus vestitus (strain NIES-2133 / IAM M-273 / BP-1), this protein is Proline--tRNA ligase.